A 270-amino-acid polypeptide reads, in one-letter code: 4-hydroxy-tetrahydrodipicolinate reductase (270 aa).

NAD(+) contacts are provided by residues 11–16 and E37; that span reads GCNGRM. An NADP(+)-binding site is contributed by R38. Residues 101–103 and 125–128 each bind NAD(+); these read GTT and ASNY. H158 (proton donor/acceptor) is an active-site residue. Residue H159 participates in (S)-2,3,4,5-tetrahydrodipicolinate binding. The active-site Proton donor is the K162. 168–169 contributes to the (S)-2,3,4,5-tetrahydrodipicolinate binding site; the sequence is GT.

The protein belongs to the DapB family.

It localises to the cytoplasm. It catalyses the reaction (S)-2,3,4,5-tetrahydrodipicolinate + NAD(+) + H2O = (2S,4S)-4-hydroxy-2,3,4,5-tetrahydrodipicolinate + NADH + H(+). The catalysed reaction is (S)-2,3,4,5-tetrahydrodipicolinate + NADP(+) + H2O = (2S,4S)-4-hydroxy-2,3,4,5-tetrahydrodipicolinate + NADPH + H(+). The protein operates within amino-acid biosynthesis; L-lysine biosynthesis via DAP pathway; (S)-tetrahydrodipicolinate from L-aspartate: step 4/4. Catalyzes the conversion of 4-hydroxy-tetrahydrodipicolinate (HTPA) to tetrahydrodipicolinate. The chain is 4-hydroxy-tetrahydrodipicolinate reductase from Aeromonas salmonicida (strain A449).